Here is a 476-residue protein sequence, read N- to C-terminus: tRNA(Ile)-lysidine synthase (476 aa).

An ATP-binding site is contributed by 30–35; sequence SGGPDS.

It belongs to the tRNA(Ile)-lysidine synthase family.

It is found in the cytoplasm. It catalyses the reaction cytidine(34) in tRNA(Ile2) + L-lysine + ATP = lysidine(34) in tRNA(Ile2) + AMP + diphosphate + H(+). Ligates lysine onto the cytidine present at position 34 of the AUA codon-specific tRNA(Ile) that contains the anticodon CAU, in an ATP-dependent manner. Cytidine is converted to lysidine, thus changing the amino acid specificity of the tRNA from methionine to isoleucine. This is tRNA(Ile)-lysidine synthase from Bacillus cereus (strain ZK / E33L).